The sequence spans 134 residues: ATP synthase epsilon chain, chloroplastic (134 aa).

This sequence belongs to the ATPase epsilon chain family. As to quaternary structure, F-type ATPases have 2 components, CF(1) - the catalytic core - and CF(0) - the membrane proton channel. CF(1) has five subunits: alpha(3), beta(3), gamma(1), delta(1), epsilon(1). CF(0) has three main subunits: a, b and c.

It is found in the plastid. It localises to the chloroplast thylakoid membrane. Its function is as follows. Produces ATP from ADP in the presence of a proton gradient across the membrane. In Amborella trichopoda, this protein is ATP synthase epsilon chain, chloroplastic.